Consider the following 566-residue polypeptide: Berberine bridge enzyme-like D-2 (566 aa).

A signal peptide spans 1-33 (MKRNISMSLQRLLIILMMISFLFTSLLVPSVSA). A disulfide bridge links cysteine 42 with cysteine 103. Asparagine 50 carries an N-linked (GlcNAc...) asparagine glycan. An FAD-binding PCMH-type domain is found at 81 to 257 (SKPKPTVIIV…YAWKIRLLKV (177 aa)). A Pros-8alpha-FAD histidine modification is found at histidine 118. 3 N-linked (GlcNAc...) asparagine glycosylation sites follow: asparagine 364, asparagine 378, and asparagine 503.

The protein belongs to the oxygen-dependent FAD-linked oxidoreductase family. Requires FAD as cofactor.

Its subcellular location is the vacuole. It participates in alkaloid biosynthesis; nicotine biosynthesis. Its function is as follows. Involved in the biosynthesis of pyridine alkaloid natural products, leading mainly to the production of anabasine, anatabine, nicotine and nornicotine, effective deterrents against herbivores with antiparasitic and pesticide properties (neurotoxins); nornicotine serves as the precursor in the synthesis of the carcinogen compound N'-nitrosonornicotine (NNN). Catalyzes a late oxidation step subsequent to the pyridine ring condensation reaction in the biosynthesis of alkaloids. The protein is Berberine bridge enzyme-like D-2 of Nicotiana tabacum (Common tobacco).